Consider the following 310-residue polypeptide: Olfactory receptor 4C16 (310 aa).

Residues 1 to 23 (MQLNNNVTEFILLGLTQDPFWKK) lie on the Extracellular side of the membrane. Asn6 carries N-linked (GlcNAc...) asparagine glycosylation. The helical transmembrane segment at 24 to 47 (IVFVIFLRLYLGTLLGNLLIIISV) threads the bilayer. Residues 48–55 (KTSQALKN) lie on the Cytoplasmic side of the membrane. A helical transmembrane segment spans residues 56–77 (PMFFFLFYLSLSDTCLSTSITP). Residues 78-98 (RMIVDALLKKTTISFSECMIQ) are Extracellular-facing. Cys95 and Cys187 are disulfide-bonded. The helical transmembrane segment at 99–118 (VFSSHVFGCLEIFILILTAV) threads the bilayer. Residues 119-137 (DRYVDICKPLHYMTIISQW) lie on the Cytoplasmic side of the membrane. Residues 138–156 (VCGVLMAVAWVGSCVHSLV) form a helical membrane-spanning segment. Over 157–193 (QIFLALSLPFCGPNVINHCFCDLQPLLKQACSETYVV) the chain is Extracellular. Residues 194–217 (NLLLVSNSGAICAVSYVMLIFSYV) form a helical membrane-spanning segment. Residues 218–233 (IFLHSLRNHSAEVIKK) are Cytoplasmic-facing. A helical membrane pass occupies residues 234-256 (ALSTCVSHIIVVILFFGPCIFMY). The Extracellular segment spans residues 257–267 (TCLATVFPMDK). Residues 268–287 (MIAVFYTVGTSFLNPVIYTL) traverse the membrane as a helical segment. The Cytoplasmic segment spans residues 288–310 (KNTEVKSAMRKLWSKKLITDDKR).

The protein belongs to the G-protein coupled receptor 1 family.

It is found in the cell membrane. Odorant receptor. This chain is Olfactory receptor 4C16 (OR4C16), found in Homo sapiens (Human).